The sequence spans 367 residues: Histidinol-phosphate aminotransferase 1 (367 aa).

Position 229 is an N6-(pyridoxal phosphate)lysine (Lys229).

The protein belongs to the class-II pyridoxal-phosphate-dependent aminotransferase family. Histidinol-phosphate aminotransferase subfamily. Homodimer. Pyridoxal 5'-phosphate is required as a cofactor.

The catalysed reaction is L-histidinol phosphate + 2-oxoglutarate = 3-(imidazol-4-yl)-2-oxopropyl phosphate + L-glutamate. Its pathway is amino-acid biosynthesis; L-histidine biosynthesis; L-histidine from 5-phospho-alpha-D-ribose 1-diphosphate: step 7/9. The protein is Histidinol-phosphate aminotransferase 1 of Idiomarina loihiensis (strain ATCC BAA-735 / DSM 15497 / L2-TR).